The chain runs to 724 residues: Methionine--tRNA ligase (724 aa).

A 'HIGH' region motif is present at residues 12–22; that stretch reads PYVNNIPHLGN. 4 residues coordinate Zn(2+): cysteine 143, cysteine 146, cysteine 155, and cysteine 158. The 'KMSKS' region signature appears at 330–334; the sequence is KFSKS. ATP is bound at residue lysine 333. In terms of domain architecture, tRNA-binding spans 560–665; it reads FREKVLLRVV…KNPIAGERII (106 aa).

It belongs to the class-I aminoacyl-tRNA synthetase family. MetG type 1 subfamily. Homodimer. The cofactor is Zn(2+).

The protein localises to the cytoplasm. It catalyses the reaction tRNA(Met) + L-methionine + ATP = L-methionyl-tRNA(Met) + AMP + diphosphate. In terms of biological role, is required not only for elongation of protein synthesis but also for the initiation of all mRNA translation through initiator tRNA(fMet) aminoacylation. The sequence is that of Methionine--tRNA ligase from Borreliella afzelii (strain PKo) (Borrelia afzelii).